Reading from the N-terminus, the 315-residue chain is 4-hydroxy-3-methylbut-2-enyl diphosphate reductase (315 aa).

Cys-12 lines the [4Fe-4S] cluster pocket. The (2E)-4-hydroxy-3-methylbut-2-enyl diphosphate site is built by His-41 and His-74. The dimethylallyl diphosphate site is built by His-41 and His-74. 2 residues coordinate isopentenyl diphosphate: His-41 and His-74. Residue Cys-96 coordinates [4Fe-4S] cluster. His-124 is a (2E)-4-hydroxy-3-methylbut-2-enyl diphosphate binding site. Position 124 (His-124) interacts with dimethylallyl diphosphate. His-124 provides a ligand contact to isopentenyl diphosphate. Catalysis depends on Glu-126, which acts as the Proton donor. Residue Thr-168 coordinates (2E)-4-hydroxy-3-methylbut-2-enyl diphosphate. Cys-198 is a binding site for [4Fe-4S] cluster. Residues Ser-226, Ser-227, Asn-228, and Ser-270 each contribute to the (2E)-4-hydroxy-3-methylbut-2-enyl diphosphate site. Ser-226, Ser-227, Asn-228, and Ser-270 together coordinate dimethylallyl diphosphate. Isopentenyl diphosphate is bound by residues Ser-226, Ser-227, Asn-228, and Ser-270.

Belongs to the IspH family. The cofactor is [4Fe-4S] cluster.

It catalyses the reaction isopentenyl diphosphate + 2 oxidized [2Fe-2S]-[ferredoxin] + H2O = (2E)-4-hydroxy-3-methylbut-2-enyl diphosphate + 2 reduced [2Fe-2S]-[ferredoxin] + 2 H(+). It carries out the reaction dimethylallyl diphosphate + 2 oxidized [2Fe-2S]-[ferredoxin] + H2O = (2E)-4-hydroxy-3-methylbut-2-enyl diphosphate + 2 reduced [2Fe-2S]-[ferredoxin] + 2 H(+). Its pathway is isoprenoid biosynthesis; dimethylallyl diphosphate biosynthesis; dimethylallyl diphosphate from (2E)-4-hydroxy-3-methylbutenyl diphosphate: step 1/1. It participates in isoprenoid biosynthesis; isopentenyl diphosphate biosynthesis via DXP pathway; isopentenyl diphosphate from 1-deoxy-D-xylulose 5-phosphate: step 6/6. Functionally, catalyzes the conversion of 1-hydroxy-2-methyl-2-(E)-butenyl 4-diphosphate (HMBPP) into a mixture of isopentenyl diphosphate (IPP) and dimethylallyl diphosphate (DMAPP). Acts in the terminal step of the DOXP/MEP pathway for isoprenoid precursor biosynthesis. This Pseudomonas syringae pv. tomato (strain ATCC BAA-871 / DC3000) protein is 4-hydroxy-3-methylbut-2-enyl diphosphate reductase.